The chain runs to 270 residues: tRNA pseudouridine synthase A (270 aa).

The active-site Nucleophile is D60. Residues 107–111 (FHARF) form an RNA binding region. Y118 serves as a coordination point for substrate. Residues 168–172 (QCQSR) are interaction with tRNA.

This sequence belongs to the tRNA pseudouridine synthase TruA family. Homodimer.

The enzyme catalyses uridine(38/39/40) in tRNA = pseudouridine(38/39/40) in tRNA. Functionally, formation of pseudouridine at positions 38, 39 and 40 in the anticodon stem and loop of transfer RNAs. The chain is tRNA pseudouridine synthase A from Escherichia coli (strain 55989 / EAEC).